Here is a 187-residue protein sequence, read N- to C-terminus: Ribosome-recycling factor (187 aa).

It belongs to the RRF family.

Its subcellular location is the cytoplasm. Its function is as follows. Responsible for the release of ribosomes from messenger RNA at the termination of protein biosynthesis. May increase the efficiency of translation by recycling ribosomes from one round of translation to another. The protein is Ribosome-recycling factor of Paracoccus denitrificans (strain Pd 1222).